The chain runs to 1194 residues: ATP-dependent RNA helicase DHX30 (1194 aa).

The span at 1–10 shows a compositional bias: basic and acidic residues; sequence MFSLDSFRKD. Residues 1-27 are disordered; sequence MFSLDSFRKDRAQHRQRQCKLPPPRLP. Phosphoserine occurs at positions 6 and 15. The DRBM domain maps to 53-121; that stretch reads PKNLLNSVIG…QAAAAACQLF (69 aa). The tract at residues 150–199 is disordered; sequence ADSWWRPEPTMPPTSWRQLNPESIRPGGPGGLSRSLGREEEEDEEEELEE. The span at 188 to 199 shows a compositional bias: acidic residues; it reads EEEEDEEEELEE. 2 positions are modified to phosphoserine: serine 226 and serine 380. The region spanning 444-612 is the Helicase ATP-binding domain; sequence LNAIEQHPVV…FGGCPVIKVP (169 aa). ATP is bound at residue 457 to 464; sequence GDTGCGKT. A DEAH box motif is present at residues 559–562; the sequence is DEVH. In terms of domain architecture, Helicase C-terminal spans 654-827; sequence LVTDLVLHID…NLVLQAKIHM (174 aa).

This sequence belongs to the DEAD box helicase family. DEAH subfamily. In terms of assembly, identified in a complex with TFAM and SSBP1. Interacts with AGO1 and AGO2. Interacts (via N-terminus) with ZC3HAV1 (via N-terminal domain) in an RNA-independent manner. Found in a complex with GRSF1, DDX28, FASTKD2 and FASTKD5. In terms of processing, phosphorylated on Ser-15.

Its subcellular location is the cytoplasm. The protein resides in the mitochondrion. It is found in the mitochondrion matrix. It localises to the mitochondrion nucleoid. It carries out the reaction ATP + H2O = ADP + phosphate + H(+). RNA-dependent helicase. Plays an important role in the assembly of the mitochondrial large ribosomal subunit. Required for optimal function of the zinc-finger antiviral protein ZC3HAV1. Associates with mitochondrial DNA. Involved in nervous system development and differentiation through its involvement in the up-regulation of a number of genes which are required for neurogenesis, including GSC, NCAM1, neurogenin, and NEUROD. The sequence is that of ATP-dependent RNA helicase DHX30 (DHX30) from Homo sapiens (Human).